Reading from the N-terminus, the 201-residue chain is MDSEQINVNLDIGAKAVMLARRAAAAKLNNEKLPEVPDDPIFHEKHGVFTTINTYPDNQLRGCIGFPEPYYELGEGIIKSSIYAATDDPRFDPMEPDELNRVTFELSILTVPQEVTVNPEERPKAITVGKDGIIAVYNGASGLLLPQVATEYRMSAEEFLEALCEKAGLWQGCWKYKKVKISKFQAIVFGEIEPNGKVEQR.

Residues 11 to 200 (DIGAKAVMLA…EIEPNGKVEQ (190 aa)) enclose the AMMECR1 domain.

The protein is Protein TV1384 of Thermoplasma volcanium (strain ATCC 51530 / DSM 4299 / JCM 9571 / NBRC 15438 / GSS1).